Here is a 277-residue protein sequence, read N- to C-terminus: Transcription antiterminator LicT (277 aa).

PRD domains are found at residues 65–170 and 171–277; these read DIPI…EEMP and NIIN…VKQA.

Belongs to the transcriptional antiterminator BglG family. Phosphorylated.

Its function is as follows. Mediates positive regulation of the glucanase operon (licST) by functioning as an antiterminator factor of transcription. Prevents termination at terminator lic-t. In Bacillus subtilis (strain 168), this protein is Transcription antiterminator LicT (licT).